A 281-amino-acid chain; its full sequence is Large ribosomal subunit protein mL46 (281 aa).

A mitochondrion-targeting transit peptide spans 1-19 (MKVNLMLKRGLATATATAS). Positions 106-118 (RERSTKQEVKLSD) are enriched in basic and acidic residues. The segment at 106 to 141 (RERSTKQEVKLSDDSTVAFSNNQKEQSKDDVNRPVI) is disordered. Residues 119-129 (DSTVAFSNNQK) show a composition bias toward polar residues.

The protein belongs to the mitochondrion-specific ribosomal protein mL46 family. In terms of assembly, component of the mitochondrial large ribosomal subunit (mt-LSU). Mature yeast 74S mitochondrial ribosomes consist of a small (37S) and a large (54S) subunit. The 37S small subunit contains a 15S ribosomal RNA (15S mt-rRNA) and 34 different proteins. The 54S large subunit contains a 21S rRNA (21S mt-rRNA) and 46 different proteins.

The protein localises to the mitochondrion. Its function is as follows. Component of the mitochondrial ribosome (mitoribosome), a dedicated translation machinery responsible for the synthesis of mitochondrial genome-encoded proteins, including at least some of the essential transmembrane subunits of the mitochondrial respiratory chain. The mitoribosomes are attached to the mitochondrial inner membrane and translation products are cotranslationally integrated into the membrane. In Saccharomyces cerevisiae (strain ATCC 204508 / S288c) (Baker's yeast), this protein is Large ribosomal subunit protein mL46 (MRPL17).